We begin with the raw amino-acid sequence, 394 residues long: Glycerol-1-phosphate dehydrogenase [NAD(P)+] (394 aa).

NAD(+) contacts are provided by residues aspartate 54, 116–120 (GTIHD), and 138–141 (TAPS). Aspartate 143 contributes to the substrate binding site. An NAD(+)-binding site is contributed by serine 147. A substrate-binding site is contributed by aspartate 190. Aspartate 190 and histidine 270 together coordinate Ni(2+). Position 274 (histidine 274) interacts with substrate. Position 290 (histidine 290) interacts with Ni(2+).

It belongs to the glycerol-1-phosphate dehydrogenase family. As to quaternary structure, homodimer. The cofactor is Ni(2+).

The protein localises to the cytoplasm. The catalysed reaction is sn-glycerol 1-phosphate + NAD(+) = dihydroxyacetone phosphate + NADH + H(+). The enzyme catalyses sn-glycerol 1-phosphate + NADP(+) = dihydroxyacetone phosphate + NADPH + H(+). Functionally, catalyzes the NAD(P)H-dependent reduction of dihydroxyacetonephosphate (DHAP or glycerone phosphate) to glycerol 1-phosphate (G1P). The G1P thus generated is probably used for the synthesis of phosphoglycerolipids in Gram-positive bacterial species. This Bacillus velezensis (strain DSM 23117 / BGSC 10A6 / LMG 26770 / FZB42) (Bacillus amyloliquefaciens subsp. plantarum) protein is Glycerol-1-phosphate dehydrogenase [NAD(P)+].